We begin with the raw amino-acid sequence, 825 residues long: Translation initiation factor IF-2 (825 aa).

4 stretches are compositionally biased toward basic and acidic residues: residues 1–19 (MTKK…DNKK), 35–45 (RKGEKKTEGKR), 70–98 (LLKD…EYKK), and 113–122 (KKVESVEKPA). Residues 1–239 (MTKKQENETS…TQRKDRPLPE (239 aa)) form a disordered region. The span at 158–169 (PSSSRRPSSRPS) shows a compositional bias: low complexity. The span at 181–191 (GRRRKSGKPGR) shows a compositional bias: basic residues. Residues 194–208 (QNSYADQGRGANSNR) are compositionally biased toward polar residues. A compositionally biased stretch (basic residues) spans 211-220 (QRKRKNKKHQ). In terms of domain architecture, tr-type G spans 326 to 495 (VRPPVVTIMG…ILEADMLELK (170 aa)). A G1 region spans residues 335–342 (GHVDHGKT). 335-342 (GHVDHGKT) contacts GTP. Positions 360–364 (GITQN) are G2. The segment at 381-384 (DTPG) is G3. GTP contacts are provided by residues 381-385 (DTPGH) and 435-438 (NKMD). The tract at residues 435–438 (NKMD) is G4. The tract at residues 471–473 (SAK) is G5.

The protein belongs to the TRAFAC class translation factor GTPase superfamily. Classic translation factor GTPase family. IF-2 subfamily.

Its subcellular location is the cytoplasm. In terms of biological role, one of the essential components for the initiation of protein synthesis. Protects formylmethionyl-tRNA from spontaneous hydrolysis and promotes its binding to the 30S ribosomal subunits. Also involved in the hydrolysis of GTP during the formation of the 70S ribosomal complex. The chain is Translation initiation factor IF-2 from Lactobacillus delbrueckii subsp. bulgaricus (strain ATCC 11842 / DSM 20081 / BCRC 10696 / JCM 1002 / NBRC 13953 / NCIMB 11778 / NCTC 12712 / WDCM 00102 / Lb 14).